Reading from the N-terminus, the 190-residue chain is uncharacterized protein (190 aa).

The first 18 residues, 1-18, serve as a signal peptide directing secretion; that stretch reads MKLVHMASGLAVAIALAA. C19 is lipidated: N-palmitoyl cysteine. A lipid anchor (S-diacylglycerol cysteine) is attached at C19. The span at 162-182 shows a compositional bias: low complexity; that stretch reads ASGGATTTVPSTSPTQVNPSS. The segment at 162 to 190 is disordered; the sequence is ASGGATTTVPSTSPTQVNPSSAVPAPTQY.

It is found in the cell membrane. This is an uncharacterized protein from Escherichia coli (strain K12).